The primary structure comprises 184 residues: Protein PLANT CADMIUM RESISTANCE 5 (184 aa).

Over residues 1 to 26 the composition is skewed to polar residues; sequence MGRPVGQTNQAQPSVQHTASPSNKVS. The segment at 1 to 33 is disordered; that stretch reads MGRPVGQTNQAQPSVQHTASPSNKVSHNGGIGK. A helical transmembrane segment spans residues 94–114; sequence AGLLYGALFFTGASFVYSYMF.

It belongs to the cornifelin family.

It localises to the membrane. May be involved in heavy metals transport. This is Protein PLANT CADMIUM RESISTANCE 5 (PCR5) from Arabidopsis thaliana (Mouse-ear cress).